The following is a 392-amino-acid chain: Formate-dependent phosphoribosylglycinamide formyltransferase (392 aa).

Residues 12–13 and glutamate 72 each bind N(1)-(5-phospho-beta-D-ribosyl)glycinamide; that span reads EL. ATP-binding positions include arginine 104, lysine 145, 150–155, 185–188, and glutamate 193; these read SSGKGQ and EAFV. One can recognise an ATP-grasp domain in the interval 109–300; that stretch reads DLAARDLGLR…EFELHARAVL (192 aa). Mg(2+)-binding residues include glutamate 258 and glutamate 270. N(1)-(5-phospho-beta-D-ribosyl)glycinamide-binding positions include aspartate 277, lysine 348, and 355–356; that span reads RR.

Belongs to the PurK/PurT family. As to quaternary structure, homodimer.

It carries out the reaction N(1)-(5-phospho-beta-D-ribosyl)glycinamide + formate + ATP = N(2)-formyl-N(1)-(5-phospho-beta-D-ribosyl)glycinamide + ADP + phosphate + H(+). It functions in the pathway purine metabolism; IMP biosynthesis via de novo pathway; N(2)-formyl-N(1)-(5-phospho-D-ribosyl)glycinamide from N(1)-(5-phospho-D-ribosyl)glycinamide (formate route): step 1/1. Functionally, involved in the de novo purine biosynthesis. Catalyzes the transfer of formate to 5-phospho-ribosyl-glycinamide (GAR), producing 5-phospho-ribosyl-N-formylglycinamide (FGAR). Formate is provided by PurU via hydrolysis of 10-formyl-tetrahydrofolate. The protein is Formate-dependent phosphoribosylglycinamide formyltransferase of Chlorobaculum tepidum (strain ATCC 49652 / DSM 12025 / NBRC 103806 / TLS) (Chlorobium tepidum).